A 411-amino-acid polypeptide reads, in one-letter code: Serine hydroxymethyltransferase (411 aa).

(6S)-5,6,7,8-tetrahydrofolate is bound by residues Leu113 and 117–119; that span reads GHL. Lys222 bears the N6-(pyridoxal phosphate)lysine mark. (6S)-5,6,7,8-tetrahydrofolate-binding positions include Glu238 and 346–348; that span reads SPF.

Belongs to the SHMT family. As to quaternary structure, homodimer. Pyridoxal 5'-phosphate is required as a cofactor.

It localises to the cytoplasm. It carries out the reaction (6R)-5,10-methylene-5,6,7,8-tetrahydrofolate + glycine + H2O = (6S)-5,6,7,8-tetrahydrofolate + L-serine. It functions in the pathway one-carbon metabolism; tetrahydrofolate interconversion. Its pathway is amino-acid biosynthesis; glycine biosynthesis; glycine from L-serine: step 1/1. In terms of biological role, catalyzes the reversible interconversion of serine and glycine with tetrahydrofolate (THF) serving as the one-carbon carrier. This reaction serves as the major source of one-carbon groups required for the biosynthesis of purines, thymidylate, methionine, and other important biomolecules. Also exhibits THF-independent aldolase activity toward beta-hydroxyamino acids, producing glycine and aldehydes, via a retro-aldol mechanism. The chain is Serine hydroxymethyltransferase from Prochlorococcus marinus (strain NATL1A).